A 382-amino-acid chain; its full sequence is Leucoanthocyanidin reductase (382 aa).

Residues 19–25, Arg-44, and Lys-52 contribute to the NADP(+) site; that span reads GGTGFIG. The active-site Proton acceptor is the Lys-142. Arg-146 provides a ligand contact to NADP(+).

This sequence belongs to the NmrA-type oxidoreductase family. Isoflavone reductase subfamily. In terms of assembly, monomer.

It carries out the reaction (2R,3S)-catechin + NADP(+) + H2O = (2R,3S,4S)-leucocyanidin + NADPH + H(+). The protein operates within flavonoid metabolism; proanthocyanidin biosynthesis. In terms of biological role, catalyzes the synthesis of catechin from 3,4-cis-leucocyanidin. Also synthesizes afzelechin and gallocatechin. This Desmodium uncinatum (Silverleaf Spanish clover) protein is Leucoanthocyanidin reductase (LAR).